A 227-amino-acid chain; its full sequence is MSPMKVAVVGASGKVGRLLINQLKANDSFSTPLAIVRTQDQVNYFKNEVGVDASLTDIENASVSEITDAIKAYDAVVFSAGAGGKGMERIFTVDLDGCIKVVEACEKAGIKRFVVVSALKAEDRDFWYNIKGLREYYIAKRSADREVRNSNLDYTILQPGSLELNKGTGLLQPLDKLEEKASVNYSINREDVASFIVESLLHPNATVKKTISLVNGNEPMEKFIQSL.

Belongs to the UPF0659 family.

It is found in the cytoplasm. In Saccharomyces cerevisiae (strain ATCC 204508 / S288c) (Baker's yeast), this protein is UPF0659 protein YMR090W.